A 264-amino-acid polypeptide reads, in one-letter code: Tropinone reductase homolog At5g06060 (264 aa).

15–39 contacts NADP(+); it reads LVTGGTRGIGRAVVEELAKFGAKVH. Ser-148 contributes to the substrate binding site. The active-site Proton acceptor is the Tyr-161.

It belongs to the short-chain dehydrogenases/reductases (SDR) family. SDR65C subfamily.

The sequence is that of Tropinone reductase homolog At5g06060 from Arabidopsis thaliana (Mouse-ear cress).